Reading from the N-terminus, the 313-residue chain is Porphobilinogen deaminase (313 aa).

Cys242 is subject to S-(dipyrrolylmethanemethyl)cysteine.

It belongs to the HMBS family. In terms of assembly, monomer. Requires dipyrromethane as cofactor.

It carries out the reaction 4 porphobilinogen + H2O = hydroxymethylbilane + 4 NH4(+). It functions in the pathway porphyrin-containing compound metabolism; protoporphyrin-IX biosynthesis; coproporphyrinogen-III from 5-aminolevulinate: step 2/4. Its function is as follows. Tetrapolymerization of the monopyrrole PBG into the hydroxymethylbilane pre-uroporphyrinogen in several discrete steps. The sequence is that of Porphobilinogen deaminase from Pseudomonas fluorescens (strain Pf0-1).